The primary structure comprises 327 residues: MAWWKAWVEQEGVSVKGSSHFNPDPDAETLYKAMKGIGTNEQAIIDVLTKRSNVQRQQIAKSFKAQFGKDLTETLKSELSGKFERLIVALMYPPYSYEAKELHDAMKGLGTKEGVIIEILASRTKNQLREIMKAYEEDYGSTLEEDIQGDTSGYLERILVCLLQGSRDDVSGFVDPGLVLQDAQALHEAGEKIMGTDEMKFITILCTRSATHLMRVFEEYEKIANKCIEDSIKSETHGSLEEAMLTVVKCTRNVHSYFAERLYYAMKGAGTRDGTLIRNIVSRSEIDLNLIKGQFKKMYGKTLSSMIMADTSGYYKTALLNLVGTDL.

Annexin repeat units follow at residues F21–Y92, P93–Q164, G177–K249, and N253–G324. Ca(2+) contacts are provided by M266, G268, G270, and D310.

Belongs to the annexin family.

This protein is an anticoagulant protein that acts as an indirect inhibitor of the thromboplastin-specific complex, which is involved in the blood coagulation cascade. This chain is Annexin A8 (Anxa8), found in Mus musculus (Mouse).